A 433-amino-acid polypeptide reads, in one-letter code: CinA-like protein (433 aa).

This sequence belongs to the CinA family.

This is CinA-like protein from Prochlorococcus marinus subsp. pastoris (strain CCMP1986 / NIES-2087 / MED4).